The sequence spans 122 residues: Large ribosomal subunit protein uL14 (122 aa).

This sequence belongs to the universal ribosomal protein uL14 family. Part of the 50S ribosomal subunit. Forms a cluster with proteins L3 and L19. In the 70S ribosome, L14 and L19 interact and together make contacts with the 16S rRNA in bridges B5 and B8.

In terms of biological role, binds to 23S rRNA. Forms part of two intersubunit bridges in the 70S ribosome. This chain is Large ribosomal subunit protein uL14, found in Bartonella quintana (strain Toulouse) (Rochalimaea quintana).